We begin with the raw amino-acid sequence, 282 residues long: Bifunctional protein FolD (282 aa).

NADP(+) contacts are provided by residues 165–167 (NRS), serine 190, and isoleucine 231.

It belongs to the tetrahydrofolate dehydrogenase/cyclohydrolase family. Homodimer.

It carries out the reaction (6R)-5,10-methylene-5,6,7,8-tetrahydrofolate + NADP(+) = (6R)-5,10-methenyltetrahydrofolate + NADPH. It catalyses the reaction (6R)-5,10-methenyltetrahydrofolate + H2O = (6R)-10-formyltetrahydrofolate + H(+). It functions in the pathway one-carbon metabolism; tetrahydrofolate interconversion. In terms of biological role, catalyzes the oxidation of 5,10-methylenetetrahydrofolate to 5,10-methenyltetrahydrofolate and then the hydrolysis of 5,10-methenyltetrahydrofolate to 10-formyltetrahydrofolate. In Clostridium botulinum (strain Kyoto / Type A2), this protein is Bifunctional protein FolD.